The following is a 1249-amino-acid chain: Minor capsid protein M1249L (1249 aa).

This sequence belongs to the asfivirus M1249L family. In terms of assembly, interacts with the minor capsid protein p17 and with the hexon capsid protein p72 capsomers; these interactions form a rigid zipper structure that stabilizes the capsomers. Interacts with host IRF3.

The protein localises to the virion. It localises to the host cytoplasm. In terms of biological role, together with the penton and the other minor capsid proteins (p17, p49), forms a complicated network immediately below the outer capsid shell, stabilizing the whole capsid. In addition, blocks IFN-beta transactivation mediated by the cGAS-STING pathway and regulates the transcriptional activity of IFN-beta. Mechanistically, suppresses the phosphorylation of host key adapter protein TBK1 and degrades host IRF3 in the cytoplasm. This chain is Minor capsid protein M1249L, found in Ornithodoros (relapsing fever ticks).